Here is a 60-residue protein sequence, read N- to C-terminus: Large ribosomal subunit protein bL32 (60 aa).

Belongs to the bacterial ribosomal protein bL32 family.

This Kosmotoga olearia (strain ATCC BAA-1733 / DSM 21960 / TBF 19.5.1) protein is Large ribosomal subunit protein bL32.